A 698-amino-acid chain; its full sequence is Interleukin enhancer-binding factor 3 (698 aa).

The 375-residue stretch at 5–379 (RIFLNDDRHV…ALKRPMEEDG (375 aa)) folds into the DZF domain. Disordered stretches follow at residues 51-88 (QQEK…PTRT), 374-403 (PMEE…PPQA), and 473-522 (EEKE…KHGK). Residues 61–71 (EQPEPEEPETT) are compositionally biased toward acidic residues. Basic and acidic residues-rich tracts occupy residues 72 to 81 (EEGKDSEGKT) and 374 to 384 (PMEEDGEDKSP). The short motif at 372 to 390 (KRPMEEDGEDKSPSKKKKK) is the Bipartite nuclear localization signal element. The region spanning 399–468 (EPPQAMNALM…AVKVLQDMGL (70 aa)) is the DRBM 1 domain. Positions 490–503 (TPAQPADSTQTDSA) are enriched in polar residues. Residues 520–586 (HGKNPVMELN…ALAALEKLFP (67 aa)) enclose the DRBM 2 domain.

A component of a ybx2/frgy2-containing mRNA-ribonucleoprotein (mRNP) complex. Also a component of the CCAAT box transcription factor (CBTF) complex. In terms of processing, phosphorylated. Phosphorylation affects nuclear translocation. Post-translationally, methylated by protein arginine N-methyltransferase 1 (prmt1b) in the RGG-rich domain. Methylation decreases DNA-binding and thereby decreases transcription of the gata2 gene, but does not regulate dsRNA binding or subcellular localization.

The protein localises to the nucleus. It localises to the cytoplasm. Functionally, RNA-binding protein that plays an essential role in the biogenesis of circular RNAs (circRNAs) which are produced by back-splicing circularization of pre-mRNAs. Within the nucleus, promotes circRNAs processing by stabilizing the regulatory elements residing in the flanking introns of the circularized exons. Plays thereby a role in the back-splicing of a subset of circRNAs. As a consequence, participates in a wide range of transcriptional and post-transcriptional processes. Binds to poly-U elements and AU-rich elements (AREs) in the 3'-UTR of target mRNAs. Upon viral infection, ILF3 accumulates in the cytoplasm and participates in the innate antiviral response. Mechanistically, ILF3 becomes phosphorylated and activated by the double-stranded RNA-activated protein kinase/PKR which releases ILF3 from cellular mature circRNAs. In turn, unbound ILF3 molecules are able to interact with and thus inhibit viral mRNAs. Has a cytoplasmic role early in development as part of a ribonucleoprotein (mRNP) complex which may regulate mRNA transport and/or translation. Following nuclear localization at the mid-blastula transition, acts as a transcription factor and binds the 5'-CCAAT-3' promoter sequence to regulate transcription of the gata2 gene as a subunit of the CCAAT box transcription factor (CBTF). Its role as an mRNP component negatively regulates its activity as a transcription factor by precluding its nuclear localization. The polypeptide is Interleukin enhancer-binding factor 3 (Xenopus tropicalis (Western clawed frog)).